A 292-amino-acid polypeptide reads, in one-letter code: 33 kDa chaperonin (292 aa).

2 disulfide bridges follow: C238–C240 and C271–C274.

It belongs to the HSP33 family. Post-translationally, under oxidizing conditions two disulfide bonds are formed involving the reactive cysteines. Under reducing conditions zinc is bound to the reactive cysteines and the protein is inactive.

It is found in the cytoplasm. Functionally, redox regulated molecular chaperone. Protects both thermally unfolding and oxidatively damaged proteins from irreversible aggregation. Plays an important role in the bacterial defense system toward oxidative stress. The protein is 33 kDa chaperonin of Latilactobacillus sakei subsp. sakei (strain 23K) (Lactobacillus sakei subsp. sakei).